Reading from the N-terminus, the 81-residue chain is Large ribosomal subunit protein bL31B (81 aa).

Belongs to the bacterial ribosomal protein bL31 family. Type B subfamily. Part of the 50S ribosomal subunit.

This Bacillus licheniformis (strain ATCC 14580 / DSM 13 / JCM 2505 / CCUG 7422 / NBRC 12200 / NCIMB 9375 / NCTC 10341 / NRRL NRS-1264 / Gibson 46) protein is Large ribosomal subunit protein bL31B.